The following is a 1755-amino-acid chain: Periplakin (1755 aa).

Over residues 1–11 (MHSLFRKRNKG) the composition is skewed to basic residues. Residues 1–20 (MHSLFRKRNKGKYSPTVQTR) are disordered. Serine 14 is subject to Phosphoserine. Coiled coils occupy residues 16–125 (TVQT…KQMY) and 182–387 (LAKD…QQVV). 3 Spectrin repeats span residues 214–315 (QDYM…SHLK), 321–483 (HQFH…HALQ), and 503–610 (RQLL…EKVD). In terms of domain architecture, SH3 spans 397–453 (LKPIPVEALCDFESDQGLISRGYSYTLQKNNGESWELTDSTGKKLAAPAVCFIIPPT). Phosphoserine is present on serine 463. Coiled coils occupy residues 611–819 (VANR…RNSH) and 883–1644 (LSSG…SVAV). A phosphoserine mark is found at serine 885, serine 947, serine 1583, and serine 1656. The interval 1556-1755 (ELDFLREENH…ELAVLVSGQK (200 aa)) is interacts with BFSP2 and VIM. Plectin repeat units lie at residues 1650-1684 (ENHL…WKMF) and 1699-1734 (VKGP…AAQY).

It belongs to the plakin or cytolinker family. Homodimer or a heterodimer with EVPL. Found in a complex composed of PPL (via C-terminal linker domain), BFSP1 and BFSP2 in the retinal lens. Within the complex interacts (via C-terminal linker domain) with BFSP2. Interacts with VIM. Binds to the PH domain of AKT1. Interacts with FCGR1A. May interact with PPHLN1. In terms of tissue distribution, expressed in the retinal lens (at protein level).

The protein localises to the cell junction. Its subcellular location is the desmosome. It is found in the cytoplasm. The protein resides in the cytoskeleton. It localises to the cell membrane. Its function is as follows. Component of the cornified envelope of keratinocytes. May link the cornified envelope to desmosomes and intermediate filaments. May act as a localization signal in PKB/AKT-mediated signaling. The polypeptide is Periplakin (Ppl) (Mus musculus (Mouse)).